A 393-amino-acid polypeptide reads, in one-letter code: tRNA (guanine-N(7)-)-methyltransferase (393 aa).

Residues Glu124, Glu149, and Asp176 each contribute to the S-adenosyl-L-methionine site. Position 232 (Asp232) interacts with substrate.

Belongs to the class I-like SAM-binding methyltransferase superfamily. TrmB family.

It catalyses the reaction guanosine(46) in tRNA + S-adenosyl-L-methionine = N(7)-methylguanosine(46) in tRNA + S-adenosyl-L-homocysteine. Its pathway is tRNA modification; N(7)-methylguanine-tRNA biosynthesis. Its function is as follows. Catalyzes the formation of N(7)-methylguanine at position 46 (m7G46) in tRNA. This is tRNA (guanine-N(7)-)-methyltransferase from Helicobacter pylori (strain ATCC 700392 / 26695) (Campylobacter pylori).